Consider the following 271-residue polypeptide: Glutamate racemase (271 aa).

Substrate-binding positions include 12-13 (DS) and 44-45 (YG). Cys-75 functions as the Proton donor/acceptor in the catalytic mechanism. 76–77 (NS) serves as a coordination point for substrate. Cys-185 acts as the Proton donor/acceptor in catalysis. 186–187 (TH) serves as a coordination point for substrate.

This sequence belongs to the aspartate/glutamate racemases family.

It catalyses the reaction L-glutamate = D-glutamate. It functions in the pathway cell wall biogenesis; peptidoglycan biosynthesis. Provides the (R)-glutamate required for cell wall biosynthesis. This is Glutamate racemase from Mycobacterium bovis (strain BCG / Pasteur 1173P2).